The following is a 329-amino-acid chain: Glycerol-3-phosphate dehydrogenase [NAD(P)+] (329 aa).

4 residues coordinate NADPH: Ser-10, Trp-11, Arg-31, and Lys-105. Lys-105, Gly-134, and Ser-136 together coordinate sn-glycerol 3-phosphate. NADPH is bound at residue Ala-138. Residues Lys-189, Asp-242, Ser-252, Arg-253, and Asn-254 each coordinate sn-glycerol 3-phosphate. Lys-189 serves as the catalytic Proton acceptor. Arg-253 contributes to the NADPH binding site. Val-277 and Glu-279 together coordinate NADPH.

This sequence belongs to the NAD-dependent glycerol-3-phosphate dehydrogenase family.

The protein localises to the cytoplasm. It catalyses the reaction sn-glycerol 3-phosphate + NAD(+) = dihydroxyacetone phosphate + NADH + H(+). It carries out the reaction sn-glycerol 3-phosphate + NADP(+) = dihydroxyacetone phosphate + NADPH + H(+). It participates in membrane lipid metabolism; glycerophospholipid metabolism. In terms of biological role, catalyzes the reduction of the glycolytic intermediate dihydroxyacetone phosphate (DHAP) to sn-glycerol 3-phosphate (G3P), the key precursor for phospholipid synthesis. This Neisseria gonorrhoeae (strain ATCC 700825 / FA 1090) protein is Glycerol-3-phosphate dehydrogenase [NAD(P)+].